Here is a 292-residue protein sequence, read N- to C-terminus: GTP cyclohydrolase FolE2 (292 aa).

This sequence belongs to the GTP cyclohydrolase IV family.

The enzyme catalyses GTP + H2O = 7,8-dihydroneopterin 3'-triphosphate + formate + H(+). Its pathway is cofactor biosynthesis; 7,8-dihydroneopterin triphosphate biosynthesis; 7,8-dihydroneopterin triphosphate from GTP: step 1/1. In terms of biological role, converts GTP to 7,8-dihydroneopterin triphosphate. The polypeptide is GTP cyclohydrolase FolE2 (Staphylococcus epidermidis (strain ATCC 12228 / FDA PCI 1200)).